Consider the following 244-residue polypeptide: uncharacterized protein (244 aa).

Residues 1–127 (MSGPQGSDPR…YPGQYGPYGQ (127 aa)) form a disordered region. Over residues 34–43 (WQQQPTQEAT) the composition is skewed to polar residues. Low complexity-rich tracts occupy residues 45-75 (QAPAYTPQYQQPADPAYPQQYPQPTPGYAQP) and 88-127 (PGQYGQYQQPGQYGQPGQYGQPGQYAPPGQYPGQYGPYGQ). The helical transmembrane segment at 136–156 (VAVIGGVIAVMAVLFIGAVLI) threads the bilayer.

It localises to the membrane. This is an uncharacterized protein from Mycobacterium tuberculosis (strain CDC 1551 / Oshkosh).